A 157-amino-acid chain; its full sequence is Ribosome maturation factor RimP (157 aa).

It belongs to the RimP family.

The protein localises to the cytoplasm. Its function is as follows. Required for maturation of 30S ribosomal subunits. This chain is Ribosome maturation factor RimP, found in Petrotoga mobilis (strain DSM 10674 / SJ95).